The chain runs to 563 residues: Beta-catenin-like protein 1 (563 aa).

Met1 is modified (N-acetylmethionine). Residues 1–81 (MDVGELLSYQ…EEEEPLDESS (81 aa)) form a disordered region. Residues 16–33 (KRPRDDEEEELKTRRKQT) carry the Nuclear localization signal motif. Basic and acidic residues predominate over residues 34-45 (GPRERGRYREEE). Over residues 66-78 (DGEEEEEEEEPLD) the composition is skewed to acidic residues. HEAT repeat units lie at residues 79–129 (ESSV…VVAT) and 134–176 (YHLL…TLHE). An N6-acetyllysine modification is found at Lys91. A Nuclear export signal (NES) motif is present at residues 130–140 (MPDLYHLLVEL). 5 ARM repeats span residues 178-228 (EEGA…MAEF), 229-273 (RPEM…LQDN), 274-323 (DENR…CLML), 325-363 (SNRE…AMIG), and 364-417 (PEGT…LLRN). At Ser389 the chain carries Phosphoserine. A coiled-coil region spans residues 476–540 (DMEDEFYLRR…HIIKEYAENI (65 aa)). At Ser545 the chain carries Phosphoserine.

Component of the PRP19-CDC5L splicing complex composed of a core complex comprising a homotetramer of PRPF19, CDC5L, PLRG1 and BCAS2, and at least three less stably associated proteins CTNNBL1, CWC15 and HSPA8. Interacts directly with CWC15 and CDC5L in the complex. Interacts with AICDA; the interaction is important for the antibody diversification activity of AICDA. Interacts with PRPF31 (via its NLS). Interacts (via its N-terminal NLS) with KPNA1 and KPNA2.

It is found in the nucleus. Its function is as follows. Component of the PRP19-CDC5L complex that forms an integral part of the spliceosome and is required for activating pre-mRNA splicing. Participates in AID/AICDA-mediated somatic hypermutation (SHM) and class-switch recombination (CSR), 2 processes resulting in the production of high-affinity, mutated isotype-switched antibodies. The sequence is that of Beta-catenin-like protein 1 (Ctnnbl1) from Mus musculus (Mouse).